Consider the following 1198-residue polypeptide: Fibronectin type-III domain-containing protein 3A (1198 aa).

Residues 188 to 201 show a composition bias toward basic and acidic residues; sequence KKLKDRQGTQKDKM. The disordered stretch occupies residues 188–257; the sequence is KKLKDRQGTQ…VDPEMEEKDE (70 aa). 3 positions are modified to phosphoserine: serine 203, serine 207, and serine 213. 9 consecutive Fibronectin type-III domains span residues 268 to 369, 373 to 465, 469 to 562, 566 to 660, 664 to 757, 761 to 851, 863 to 950, 951 to 1045, and 1049 to 1151; these read NIVK…TLSC, PPNA…TSGC, VPAS…TCPD, VPVK…TPAV, PCLP…TAPG, QCRP…TPPS, SDDD…TKPL, PPDP…TPKS, and ALKA…TEPP. Lysine 384 bears the N6-acetyllysine mark. A helical transmembrane segment spans residues 1177–1197; sequence ILVVFAFFSILIAFIIQYFVI.

This sequence belongs to the FNDC3 family. Testis. Localizes to the acrosome of spermatids, as well as to Leydig cells. Can be detected on the acrosome beginning at steps 2-3 and continuing until step 12 of spermiogenesis.

The protein resides in the golgi apparatus membrane. In terms of biological role, mediates spermatid-Sertoli adhesion during spermatogenesis. This Mus musculus (Mouse) protein is Fibronectin type-III domain-containing protein 3A (Fndc3a).